A 503-amino-acid polypeptide reads, in one-letter code: Maturase K (503 aa).

It belongs to the intron maturase 2 family. MatK subfamily.

It is found in the plastid. The protein resides in the chloroplast. Usually encoded in the trnK tRNA gene intron. Probably assists in splicing its own and other chloroplast group II introns. The chain is Maturase K from Panax quinquefolius (American ginseng).